The sequence spans 8081 residues: Muscle M-line assembly protein unc-89 (8081 aa).

The segment at 24–57 is disordered; sequence DVNYSTHSSRSSYRSESLTSRTDGRGRSTSSEII. Residues 28-54 show a composition bias toward low complexity; that stretch reads STHSSRSSYRSESLTSRTDGRGRSTSS. Residues 63 to 127 enclose the SH3 domain; it reads RSYPVYIAIQ…PGSYFETPTE (65 aa). The DH domain maps to 152–330; the sequence is KRDQVYHELL…TTIPQRVHDL (179 aa). Residues 342–498 enclose the PH domain; sequence DTGKLGRIIR…WSGSRKSSLF (157 aa). Residues 479-495 show a composition bias toward polar residues; that stretch reads ASDQQSEFSEWSGSRKS. Residues 479–531 are disordered; sequence ASDQQSEFSEWSGSRKSSLFPGPEEGGPPRKKVKSPPVISPTGSSTSIYSGGS. Over residues 518–531 the composition is skewed to low complexity; that stretch reads SPTGSSTSIYSGGS. Ig-like C2-type domains lie at 547-633, 648-736, 748-838, 946-1033, 1044-1132, and 1140-1227; these read GTRV…ASTS, PAFV…AELF, PEFQ…LKVR, PTFL…ARLV, PKFV…AKLT, and PEFD…NTLG. Cys568 and Cys621 are disulfide-bonded. Low complexity-rich tracts occupy residues 1283-1303 and 1326-1335; these read STKTTTMSTTEVTSTVGGVTV and EGSISVSKIE. The tract at residues 1283-1892 is disordered; it reads STKTTTMSTT…PAPKLTRDLK (610 aa). Basic and acidic residues-rich tracts occupy residues 1336–1351, 1361–1446, 1453–1490, 1515–1585, 1592–1832, and 1839–1857; these read VVSKTDSQTDVREGTP, ELPK…KEKS, KTGDEVKEKSPPKSPTKKEKSPEKPEDVKSPVKKEKSP, MTHE…KSPE, KKSE…KEKS, and KTGDESKEKSPEKPEEKPK. 4 consecutive RCSD domains span residues 1375-1475, 1479-1585, 1597-1695, and 1700-1799; these read KSPS…KSPE, DVKS…KSPE, EVKS…KSPQ, and KPAS…KSPE. Over residues 1858–1868 the composition is skewed to pro residues; it reads SPTPKKSPPGS. A compositionally biased stretch (basic and acidic residues) spans 1875-1892; sequence KSPEAEKPPAPKLTRDLK. 41 consecutive Ig-like C2-type domains span residues 1982–2067, 2071–2163, 2171–2261, 2269–2359, 2367–2455, 2463–2564, 2563–2651, 2657–2746, 2754–2858, 2887–2980, 2994–3081, 3087–3183, 3189–3280, 3286–3376, 3384–3469, 3482–3572, 3580–3667, 3686–3777, 3817–3908, 3920–4009, 4018–4106, 4109–4201, 4212–4297, 4302–4387, 4400–4485, 4489–4580, 4588–4678, 4681–4771, 4873–4961, 4965–5057, 5067–5160, 5171–5260, 5277–5366, 5383–5472, 5487–5578, 5595–5685, 5701–5790, 5815–5904, 5925–6014, 6038–6130, and 6150–6239; these read PEFT…AQLT, PSTT…ADLK, PKFK…AKVT, PEFV…AQLK, PKFT…VQLA, PTFA…AKPA, PAFQ…GPLK, PVEF…ATLL, PDFL…SEAQ, PKFI…ATLT, PEFI…AFLT, PVFT…SKIT, PVFE…AEVT, PTFV…ANFA, PEFV…EALT, PEFT…ANMA, PLFV…ETVG, PLFI…LKIQ, PEFV…IIVT, PDFL…VTLT, PGFF…VPLT, PSET…ATVT, PSFK…AKVN, PEIV…AALT, PGIA…CALT, PKII…GKIT, PKIT…AQLT, PNVL…GSVV, PTSG…CKVT, PKFV…CEFQ, PRFN…ATYQ, PKIN…CSVN, PFFT…AHVQ, PKFI…SFVR, PRFT…GTAT, PKLM…CDVN, PGFT…AELV, PRIR…GSLN, and PGFV…AVLD. An intrachain disulfide couples Cys2582 to Cys2635. Intrachain disulfides connect Cys2908–Cys2964 and Cys3015–Cys3065. Disulfide bonds link Cys3707-Cys3759 and Cys3838-Cys3890. The segment at 4525–4553 is disordered; the sequence is KNGKEITPSDKAQPGSDGDNKPQLVIPDA. 4 disulfides stabilise this stretch: Cys5298-Cys5350, Cys5404-Cys5456, Cys5508-Cys5560, and Cys5616-Cys5669. 2 disulfide bridges follow: Cys5836–Cys5888 and Cys5946–Cys5998. The 97-residue stretch at 6278–6374 folds into the Fibronectin type-III 1 domain; sequence PDRGPFIKEV…SPPSRLMAPP (97 aa). Ig-like C2-type domains follow at residues 6413–6502 and 6507–6596; these read PGVV…IMVD and PNFI…CTVT. The Protein kinase 1 domain occupies 6592-6878; sequence SCTVTVEAEG…VDEALDHPWI (287 aa). Disordered regions lie at residues 6954-7130, 7177-7217, 7284-7311, 7324-7343, and 7348-7372; these read KKPP…QQKI, QVEA…PQPQ, PAINLSPNPKSPRRSTPGTKSPVVLSPR, RGKPGFLPPGELAEDIDDED, and DRKKQVKPKDHDGENDFKDEKERLE. Pro residues predominate over residues 6999 to 7009; that stretch reads RQPPQIPPQPQ. Residues 7087-7110 are compositionally biased toward basic and acidic residues; the sequence is LEKRKLIPQDKGETPSHSKKEKTQ. The segment covering 7200–7215 has biased composition (pro residues); sequence KPTPSPTSPQKSPVPQ. A compositionally biased stretch (polar residues) spans 7284–7302; the sequence is PAINLSPNPKSPRRSTPGT. Positions 7528-7617 constitute an Ig-like C2-type 50 domain; sequence PIFTARLRDV…TDKSSCRLIS (90 aa). Cys7549 and Cys7600 form a disulfide bridge. The region spanning 7623 to 7721 is the Fibronectin type-III 2 domain; that stretch reads RPGRPEAELS…SSRIVQTHGK (99 aa). Positions 7746–7773 are disordered; that stretch reads STNQLGGISEESEEDSEARTANEDMKSN. The segment covering 7762–7771 has biased composition (basic and acidic residues); the sequence is EARTANEDMK. The Protein kinase 2 domain maps to 7785 to 8035; that stretch reads FQIGGLKFKG…TDEALSHKFL (251 aa).

The protein belongs to the protein kinase superfamily. CAMK Ser/Thr protein kinase family. May interact (via fibronectin type-III domain 1, Ig-like C2-type domain 48/49 and protein kinase domain 1 or C-terminus of the interkinase region) with lim-9 (via LIM zinc-binding domain). May interact (via fibronectin type-III domain 1, Ig-like C2-type domain 48/49 and kinase protein domain 1 or Ig-like C2-type domain 50, fibronectin type-III domain 2 and kinase protein domain 2) with scpl-1 isoforms a and b (via FCP1 homology domain); the interaction may act as a molecular bridge to bring two unc-89 molecules together or to stabilize a loop between the 2 kinase domains. May interact (via SH3 domain) with unc-15. May interact (via Ig-like C2-type domain 1-3) with cpna-1 (via VWFA domain). May interact (via Ig-like C2-type domain 2/3 and, Ig-like C2-type domain 50 and fibronectin type-III domain 2) with mel-26 (via MATH domain). May interact (via DH and PH domains) with rho-1, ced-10, mig-2 and cdc-42. Expressed in body-wall, pharyngeal muscles and a few muscle cells of the tail (at protein level). Expressed in gonadal myoepithelial sheath cells (at protein level). Isoform c: Expressed in body wall and vulval muscles but not in pharyngeal muscles. Isoform d: Specifically expressed in vulval, intestinal, anal depressor and anal sphincter muscles.

It is found in the cytoplasm. The protein localises to the myofibril. The protein resides in the sarcomere. Its subcellular location is the m line. In terms of biological role, structural component of the muscle M line which is involved in assembly and organization of sarcomere myofilaments. The large isoform a, isoform b, isoform d and isoform f play an essential role in maintaining the organization of sarcomeres but not myofilament alignment during body wall muscle development whereas the small isoform c and isoform d appear to have a minor role. Isoform b and isoform f are required for the organization of unc-15/paramyosin into sarcomere thick filaments in body wall muscles. By binding mel-26, a substrate adapter of the cul-3 E3 ubiquitin-protein ligase complex, regulates the organization of myosin thick filaments, likely by preventing the degradation of microtubule severing protein mei-1. Acts as a guanine nucleotide exchange factor (GEF) for Rho GTPase rho-1 but not ced-10, mig-2 and cdc-42. The large isoforms regulate Ca(2+) signaling during muscle contraction by ensuring the correct localization of sarco-endoplamic reticulum Ca(2+) ATPase sca-1 and ryanodine receptor unc-68. By controlling the contraction and/or organization of pharyngeal muscles, plays a role in the formation of pharyngeal gland cell extension. The protein is Muscle M-line assembly protein unc-89 (unc-89) of Caenorhabditis elegans.